We begin with the raw amino-acid sequence, 282 residues long: Halorhodopsin (282 aa).

The Extracellular portion of the chain corresponds to 1-29; sequence MMETAADALASGTVPLEMTQTQIFEAIQG. Residues 30–55 form a helical membrane-spanning segment; it reads DTLLASSLWINIALAGLSILLFVYMG. Over 56 to 61 the chain is Cytoplasmic; sequence RNLEDP. The helical transmembrane segment at 62–85 threads the bilayer; the sequence is RAQLIFVATLMVPLVSISSYTGLV. The Extracellular segment spans residues 86–109; it reads SGLTVSFLEMPAGHALAGQEVLTP. Residues 110–131 form a helical membrane-spanning segment; the sequence is WGRYLTWALSTPMILVALGLLA. Over 132-134 the chain is Cytoplasmic; it reads GSN. Residues 135 to 158 form a helical membrane-spanning segment; that stretch reads ATKLFTAVTADIGMCVTGLAAALT. At 159 to 161 the chain is on the extracellular side; sequence TSS. A helical transmembrane segment spans residues 162–184; the sequence is YLLRWVWYVISCAFFVVVLYVLL. At 185-196 the chain is on the cytoplasmic side; that stretch reads AEWAEDAEVAGT. The helical transmembrane segment at 197 to 220 threads the bilayer; it reads AEIFNTLKLLTVVLWLGYPIFWAL. Residues 221 to 229 are Extracellular-facing; the sequence is GAEGLAVLD. A helical transmembrane segment spans residues 230-258; it reads VAVTSWAYSGMDIVAKYLFAFLLLRWVVD. The residue at position 245 (Lys245) is an N6-(retinylidene)lysine. Residues 259–282 lie on the Cytoplasmic side of the membrane; the sequence is NERTVAGMAAGLGAPLARCAPADD.

Belongs to the archaeal/bacterial/fungal opsin family.

It localises to the cell membrane. Functionally, light-driven chloride pump. This Halorubrum sodomense protein is Halorhodopsin (hop).